The following is a 578-amino-acid chain: Putative diflavin flavoprotein A 2 (578 aa).

The segment at 39 to 233 (QQGTTSNSYL…PPPRLYAPAH (195 aa)) is zinc metallo-hydrolase. One can recognise a Flavodoxin-like domain in the interval 262–404 (VALFYASAYG…AANEFAQALK (143 aa)). The interval 429–578 (VNRVVGSLCV…TAIQHRKTSS (150 aa)) is flavodoxin-reductase-like.

This sequence in the N-terminal section; belongs to the zinc metallo-hydrolase group 3 family. It in the C-terminal section; belongs to the flavodoxin reductase family. Fe cation is required as a cofactor.

Mediates electron transfer from NADH to oxygen, reducing it to water. This modular protein has 3 redox cofactors, in other organisms the same activity requires 2 or 3 proteins. The chain is Putative diflavin flavoprotein A 2 (dfa2) from Thermosynechococcus vestitus (strain NIES-2133 / IAM M-273 / BP-1).